The primary structure comprises 492 residues: 1-aminocyclopropane-1-carboxylate synthase 1 (492 aa).

Lys277 is modified (N6-(pyridoxal phosphate)lysine).

This sequence belongs to the class-I pyridoxal-phosphate-dependent aminotransferase family. In terms of assembly, homodimer. Pyridoxal 5'-phosphate is required as a cofactor.

It catalyses the reaction S-adenosyl-L-methionine = 1-aminocyclopropane-1-carboxylate + S-methyl-5'-thioadenosine + H(+). Its pathway is alkene biosynthesis; ethylene biosynthesis via S-adenosyl-L-methionine; ethylene from S-adenosyl-L-methionine: step 1/2. Catalyzes the formation of 1-aminocyclopropane-1-carboxylate, a direct precursor of ethylene in higher plants. This Prunus mume (Japanese apricot) protein is 1-aminocyclopropane-1-carboxylate synthase 1 (ACS1).